Here is a 568-residue protein sequence, read N- to C-terminus: Periplasmic trehalase (568 aa).

A signal peptide spans 1–38 (MPHAPARSGDAMSAAAPPCCTSLLGLSLSMFVAPCALA). Substrate contacts are provided by residues R169, 176–177 (WD), N213, 222–224 (RSQ), 294–296 (RPE), and G327. Residues D329 and E511 each act as proton donor/acceptor in the active site. E526 contributes to the substrate binding site.

Belongs to the glycosyl hydrolase 37 family.

It is found in the periplasm. The enzyme catalyses alpha,alpha-trehalose + H2O = alpha-D-glucose + beta-D-glucose. Functionally, provides the cells with the ability to utilize trehalose at high osmolarity by splitting it into glucose molecules that can subsequently be taken up by the phosphotransferase-mediated uptake system. In Xanthomonas campestris pv. campestris (strain 8004), this protein is Periplasmic trehalase.